The chain runs to 411 residues: Citrate synthase (411 aa).

Catalysis depends on residues histidine 304 and aspartate 363.

It belongs to the citrate synthase family.

It catalyses the reaction oxaloacetate + acetyl-CoA + H2O = citrate + CoA + H(+). It participates in carbohydrate metabolism; tricarboxylic acid cycle; isocitrate from oxaloacetate: step 1/2. The polypeptide is Citrate synthase (gltA) (Rickettsia massiliae).